Consider the following 60-residue polypeptide: Prophage outer membrane lipoprotein RzoD (60 aa).

The signal sequence occupies residues Met-1–Gly-19. A lipid anchor (N-palmitoyl cysteine) is attached at Cys-20. Cys-20 carries S-diacylglycerol cysteine lipidation.

Belongs to the lambdalikevirus o-spanin family. In terms of assembly, homodimer; disulfide-linked. Interacts (via C-terminus) with RZ (via C-terminus). Part of the spanin complex which spans the entire periplasmic space. The spanin complex is composed of spanin, inner membrane subunit and spanin, outer membrane subunit.

It is found in the cell outer membrane. Functionally, component of the spanin complex that disrupts the outer membrane and causes cell lysis during virus exit. The spanin complex conducts the final step in cell lysis by disrupting the outer membrane after holin and endolysin action have permeabilized the inner membrane and degraded the host peptidoglycans. In Escherichia coli (strain K12), this protein is Prophage outer membrane lipoprotein RzoD (rzoD).